The primary structure comprises 881 residues: Probable inorganic carbon transporter subunit DabA (881 aa).

Residues cysteine 399, aspartate 401, histidine 585, and cysteine 600 each contribute to the Zn(2+) site.

Belongs to the inorganic carbon transporter (TC 9.A.2) DabA family. Forms a complex with DabB. Zn(2+) is required as a cofactor.

The protein localises to the cell membrane. Its function is as follows. Part of an energy-coupled inorganic carbon pump. The sequence is that of Probable inorganic carbon transporter subunit DabA from Geobacillus sp. (strain WCH70).